Consider the following 413-residue polypeptide: MTSLKYIIKLTFEVDGSVDKPDVIGAIFGQTENLFGQEFDLRELQDKGRLGRIIVEIKNKGGKAEGYIEIPSNLDRVETALIASMVESVEKVGPYNAKFELKEIEDVRAEKLKKIIERAKQILTTWTREKNLDIKEVMNEISGAVKTGELIEYGPERLPAGPDVYTDPNLIIVEGRADIINLLRYGYKNTVAVEGASGKIPQSVVELSKNKKMVIAFLDGDHGGDMILKDLINANVKIDYVARAPVGREVEELTGKEIAKSLSNMIPLSQYLKRQQESIASVSSRIETASARAEVAEQQTVQVVEQPRKEIEIKIPGNVMEEIKKLPGTLEGIIFDENWNLVERVQVRDIITKLENLTNGNASFIIFDGVITQRLLELAASKNVKLIIGVRIGGINKKPENVKILTLADVIGP.

The Toprim domain occupies 168 to 246 (PNLIIVEGRA…KIDYVARAPV (79 aa)). 3 residues coordinate Mg(2+): E174, D219, and D221.

The protein belongs to the archaeal DnaG primase family. Forms a ternary complex with MCM helicase and DNA. Component of the archaeal exosome complex. Requires Mg(2+) as cofactor.

It carries out the reaction ssDNA + n NTP = ssDNA/pppN(pN)n-1 hybrid + (n-1) diphosphate.. RNA polymerase that catalyzes the synthesis of short RNA molecules used as primers for DNA polymerase during DNA replication. Also part of the exosome, which is a complex involved in RNA degradation. Acts as a poly(A)-binding protein that enhances the interaction between heteromeric, adenine-rich transcripts and the exosome. This chain is DNA primase DnaG, found in Metallosphaera sedula (strain ATCC 51363 / DSM 5348 / JCM 9185 / NBRC 15509 / TH2).